We begin with the raw amino-acid sequence, 288 residues long: uncharacterized protein (288 aa).

To M.bovis Mb1522c, M.leprae ML1804 and M.avium MAV321.

This is an uncharacterized protein from Mycobacterium tuberculosis (strain CDC 1551 / Oshkosh).